Consider the following 438-residue polypeptide: Neutral metalloprotease ShpI (438 aa).

The signal sequence occupies residues 1–26 (MINKKKLVTSLVTSSLLATFTLGSFA). Positions 27 to 101 (DAHTYIINNE…KSENALSNSK (75 aa)) are excised as a propeptide. His-242 provides a ligand contact to Zn(2+). Residue Glu-243 is part of the active site. Zn(2+)-binding residues include His-246 and Glu-269.

The protein belongs to the peptidase M30 family. The cofactor is Zn(2+). Several different N-terminal ends may be produced, the favored N-terminus is position 102.

Its subcellular location is the secreted. Inhibited by metal- and zinc-specific inhibitors, such as EDTA and 1,10-phenanthroline in vitro. Is resistant to all inhibitors of serine, cysteine and aspartic proteases. In terms of biological role, protease that has a low substrate specificity. Catalyzes the hydrolysis of glucagon, melittin and oxidized beta-insulin at various positions in vitro. Is not able to cleave elastin or the synthetic substrates FAGLA (a substrate for neutral proteinases) and FALGPA (a substrate for collagenase). The protein is Neutral metalloprotease ShpI of Staphylococcus hyicus.